Consider the following 554-residue polypeptide: DNA ligase (554 aa).

E253 contacts ATP. K255 (N6-AMP-lysine intermediate) is an active-site residue. Residues R260, R275, E304, F344, R418, and K424 each coordinate ATP.

It belongs to the ATP-dependent DNA ligase family. It depends on Mg(2+) as a cofactor.

It carries out the reaction ATP + (deoxyribonucleotide)n-3'-hydroxyl + 5'-phospho-(deoxyribonucleotide)m = (deoxyribonucleotide)n+m + AMP + diphosphate.. Its function is as follows. DNA ligase that seals nicks in double-stranded DNA during DNA replication, DNA recombination and DNA repair. The chain is DNA ligase from Haloarcula marismortui (strain ATCC 43049 / DSM 3752 / JCM 8966 / VKM B-1809) (Halobacterium marismortui).